We begin with the raw amino-acid sequence, 257 residues long: Imidazole glycerol phosphate synthase subunit HisF (257 aa).

Residues Asp12 and Asp131 contribute to the active site.

The protein belongs to the HisA/HisF family. Heterodimer of HisH and HisF.

The protein resides in the cytoplasm. It carries out the reaction 5-[(5-phospho-1-deoxy-D-ribulos-1-ylimino)methylamino]-1-(5-phospho-beta-D-ribosyl)imidazole-4-carboxamide + L-glutamine = D-erythro-1-(imidazol-4-yl)glycerol 3-phosphate + 5-amino-1-(5-phospho-beta-D-ribosyl)imidazole-4-carboxamide + L-glutamate + H(+). It participates in amino-acid biosynthesis; L-histidine biosynthesis; L-histidine from 5-phospho-alpha-D-ribose 1-diphosphate: step 5/9. Its function is as follows. IGPS catalyzes the conversion of PRFAR and glutamine to IGP, AICAR and glutamate. The HisF subunit catalyzes the cyclization activity that produces IGP and AICAR from PRFAR using the ammonia provided by the HisH subunit. This is Imidazole glycerol phosphate synthase subunit HisF from Cellvibrio japonicus (strain Ueda107) (Pseudomonas fluorescens subsp. cellulosa).